We begin with the raw amino-acid sequence, 423 residues long: Gamma-glutamyl phosphate reductase (423 aa).

This sequence belongs to the gamma-glutamyl phosphate reductase family.

It localises to the cytoplasm. It carries out the reaction L-glutamate 5-semialdehyde + phosphate + NADP(+) = L-glutamyl 5-phosphate + NADPH + H(+). It participates in amino-acid biosynthesis; L-proline biosynthesis; L-glutamate 5-semialdehyde from L-glutamate: step 2/2. In terms of biological role, catalyzes the NADPH-dependent reduction of L-glutamate 5-phosphate into L-glutamate 5-semialdehyde and phosphate. The product spontaneously undergoes cyclization to form 1-pyrroline-5-carboxylate. The polypeptide is Gamma-glutamyl phosphate reductase (Paraburkholderia phymatum (strain DSM 17167 / CIP 108236 / LMG 21445 / STM815) (Burkholderia phymatum)).